The primary structure comprises 194 residues: Dof zinc finger protein DOF4.2 (194 aa).

The segment at 21–75 (RVCPRCYSDQTRFSYFNNNKKSQPRYKCKNCCRCWTHGGVLRNIPVTGICDKSNL) adopts a Dof-type zinc-finger fold. Residues Cys23, Cys26, Cys48, and Cys51 each coordinate Zn(2+).

The protein localises to the nucleus. Transcription factor that binds specifically to a 5'-AA[AG]G-3' consensus core sequence. The sequence is that of Dof zinc finger protein DOF4.2 (DOF4.2) from Arabidopsis thaliana (Mouse-ear cress).